A 788-amino-acid chain; its full sequence is MMDNEVLDFDIGVGVSSGGDVDDDAIDIEHHALDDDDMLDSPIMPCGNGLVGNSGNYFPNQEEEACDLLDLEPYDGLEFESEEAAKAFYNSYARRIGFSTRVSSSRRSRRDGAIIQRQFVCAKEGFRNMNEKRTKDREIKRPRTITRVGCKASLSVKMQDSGKWLVSGFVKDHNHELVPPDQVHCLRSHRQISGPAKTLIDTLQAAGMGPRRIMSALIKEYGGISKVGFTEVDCRNYMRNNRQKSIEGEIQLLLDYLRQMNADNPNFFYSVQGSEDQSVGNVFWADPKAIMDFTHFGDTVTFDTTYRSNRYRLPFAPFTGVNHHGQPILFGCAFIINETEASFVWLFNTWLAAMSAHPPVSITTDHDAVIRAAIMHVFPGARHRFCKWHILKKCQEKLSHVFLKHPSFESDFHKCVNLTESVEDFERCWFSLLDKYELRDHEWLQAIYSDRRQWVPVYLRDTFFADMSLTHRSDSINSYFDGYINASTNLSQFFKLYEKALESRLEKEVKADYDTMNSPPVLKTPSPMEKQASELYTRKLFMRFQEELVGTLTFMASKADDDGDLVTYQVAKYGEAHKAHFVKFNVLEMRANCSCQMFEFSGIICRHILAVFRVTNLLTLPPYYILKRWTRNAKSSVIFDDYNLHAYANYLESHTVRYNTLRHKASNFVQEAGKSLYTCDVAVVALQEAAKTVSLAMNKEVRRTMANRHFKASSVTGGKHQQEVLAQPEPEDEMDKKINQLRNELELANRKCEAYRTNLLSVLKEMEDQKLQVSIKVQNIKISLKDNL.

An FAR1 domain is found at 87–179; sequence AFYNSYARRI…VKDHNHELVP (93 aa). The MULE domain maps to 299–395; it reads TVTFDTTYRS…CKWHILKKCQ (97 aa). The SWIM-type zinc finger occupies 584-616; the sequence is FNVLEMRANCSCQMFEFSGIICRHILAVFRVTN. The segment at 713-733 is disordered; that stretch reads SSVTGGKHQQEVLAQPEPEDE. A coiled-coil region spans residues 731-768; the sequence is EDEMDKKINQLRNELELANRKCEAYRTNLLSVLKEMED.

The protein belongs to the FHY3/FAR1 family. Expressed in hypocotyls, rosette and cauline leaves, inflorescences stems, flowers and siliques.

It is found in the nucleus. Putative transcription activator involved in regulating light control of development. This is Protein FAR1-RELATED SEQUENCE 5 (FRS5) from Arabidopsis thaliana (Mouse-ear cress).